The primary structure comprises 98 residues: NADH-ubiquinone oxidoreductase chain 4L (98 aa).

3 consecutive transmembrane segments (helical) span residues 1–21 (MSMVYANIFLAFIMSLMGLLM), 29–49 (SLLCLEGMMLSLFVMMTVTIL), and 61–81 (IILLVFAACEAALGLSLLVMV).

The protein belongs to the complex I subunit 4L family. In terms of assembly, core subunit of respiratory chain NADH dehydrogenase (Complex I) which is composed of 45 different subunits.

Its subcellular location is the mitochondrion inner membrane. The enzyme catalyses a ubiquinone + NADH + 5 H(+)(in) = a ubiquinol + NAD(+) + 4 H(+)(out). In terms of biological role, core subunit of the mitochondrial membrane respiratory chain NADH dehydrogenase (Complex I) which catalyzes electron transfer from NADH through the respiratory chain, using ubiquinone as an electron acceptor. Part of the enzyme membrane arm which is embedded in the lipid bilayer and involved in proton translocation. The polypeptide is NADH-ubiquinone oxidoreductase chain 4L (MT-ND4L) (Phoca fasciata (Ribbon seal)).